Reading from the N-terminus, the 1256-residue chain is Cohesin subunit SA-3 (1256 aa).

The segment covering 1–22 (MPTLWSPSTQHHGSSSGSMSSP) has biased composition (low complexity). A disordered region spans residues 1-110 (MPTLWSPSTQ…GGNDKNKSVP (110 aa)). Residues 72–83 (RNVRKRAAKRPP) show a composition bias toward basic residues. The SCD domain maps to 324–409 (FVHRYRDILP…NRFKDRMVSM (86 aa)). Disordered regions lie at residues 1096–1169 (RRLQ…GPEL) and 1230–1256 (KLLH…MEDF). Residues 1113–1125 (NSGPTTPTLTSTA) show a composition bias toward polar residues. Residues 1126-1140 (VKRRQSPRTVGKRQK) show a composition bias toward basic residues. Positions 1144–1166 (GPGPGPGPGPGPGPGPGPGPGPG) are enriched in pro residues. The residue at position 1234 (serine 1234) is a Phosphoserine.

It belongs to the SCC3 family. As to quaternary structure, component of the meiosis-specific cohesin complex, which also contains the SMC1 (SMC1A or SMC1B) and SMC3 heterodimer. Such complex likely contains RAD21, or the meiosis-specific related protein REC8. Interacts with CCDC79/TERB1; recruiting cohesin to telomeres to develop structural rigidity. In terms of processing, phosphorylated. As to expression, testis specific.

It is found in the nucleus. The protein localises to the chromosome. Its function is as follows. Meiosis specific component of cohesin complex. The cohesin complex is required for the cohesion of sister chromatids after DNA replication. The cohesin complex apparently forms a large proteinaceous ring within which sister chromatids can be trapped. At anaphase, the complex is cleaved and dissociates from chromatin, allowing sister chromatids to segregate. The meiosis-specific cohesin complex probably replaces mitosis specific cohesin complex when it dissociates from chromatin during prophase I. The sequence is that of Cohesin subunit SA-3 (Stag3) from Rattus norvegicus (Rat).